The chain runs to 139 residues: uncharacterized protein (139 aa).

This is an uncharacterized protein from Caenorhabditis elegans.